The following is a 303-amino-acid chain: Methionyl-tRNA formyltransferase (303 aa).

Residue 108 to 111 (SDLP) coordinates (6S)-5,6,7,8-tetrahydrofolate.

Belongs to the Fmt family.

The catalysed reaction is L-methionyl-tRNA(fMet) + (6R)-10-formyltetrahydrofolate = N-formyl-L-methionyl-tRNA(fMet) + (6S)-5,6,7,8-tetrahydrofolate + H(+). Its function is as follows. Attaches a formyl group to the free amino group of methionyl-tRNA(fMet). The formyl group appears to play a dual role in the initiator identity of N-formylmethionyl-tRNA by promoting its recognition by IF2 and preventing the misappropriation of this tRNA by the elongation apparatus. The chain is Methionyl-tRNA formyltransferase from Rickettsia typhi (strain ATCC VR-144 / Wilmington).